A 67-amino-acid polypeptide reads, in one-letter code: Conotoxin LeDr192 (67 aa).

The first 19 residues, 1–19, serve as a signal peptide directing secretion; that stretch reads MRCFPVFIILLLLIASAPC. Positions 20-49 are excised as a propeptide; that stretch reads FDARTKTDDDVPLSPLRDNLKRTIRTRLNI. Threonine amide is present on Thr-65.

Belongs to the conotoxin T superfamily. In terms of processing, contains 2 disulfide bonds that can be either 'C1-C3, C2-C4' or 'C1-C4, C2-C3', since these disulfide connectivities have been observed for conotoxins with cysteine framework V (for examples, see AC P0DQQ7 and AC P81755). As to expression, expressed by the venom duct.

The protein localises to the secreted. In Conus litteratus (Lettered cone), this protein is Conotoxin LeDr192.